A 263-amino-acid polypeptide reads, in one-letter code: Purine nucleoside phosphorylase SAR1163 (263 aa).

Zn(2+) contacts are provided by His79, Cys124, and His141.

The protein belongs to the purine nucleoside phosphorylase YfiH/LACC1 family. In terms of assembly, homodimer. The cofactor is Cu(2+). It depends on Zn(2+) as a cofactor.

It carries out the reaction adenosine + phosphate = alpha-D-ribose 1-phosphate + adenine. The catalysed reaction is S-methyl-5'-thioadenosine + phosphate = 5-(methylsulfanyl)-alpha-D-ribose 1-phosphate + adenine. The enzyme catalyses inosine + phosphate = alpha-D-ribose 1-phosphate + hypoxanthine. It catalyses the reaction adenosine + H2O + H(+) = inosine + NH4(+). Purine nucleoside enzyme that catalyzes the phosphorolysis of adenosine and inosine nucleosides, yielding D-ribose 1-phosphate and the respective free bases, adenine and hypoxanthine. Also catalyzes the phosphorolysis of S-methyl-5'-thioadenosine into adenine and S-methyl-5-thio-alpha-D-ribose 1-phosphate. Also has adenosine deaminase activity. The chain is Purine nucleoside phosphorylase SAR1163 from Staphylococcus aureus (strain MRSA252).